A 595-amino-acid polypeptide reads, in one-letter code: uncharacterized protein (595 aa).

A signal peptide spans 1–23 (MLSLSSPPWLLLLVLFFFANGSA). N-linked (GlcNAc...) asparagine glycosylation is found at Asn31, Asn63, Asn88, Asn112, Asn144, Asn187, Asn205, Asn389, Asn480, Asn492, and Asn506. Over residues 61–83 (LENQTASSSNLNTNNEASDEQTG) the composition is skewed to polar residues. Disordered stretches follow at residues 61–119 (LENQ…VSSL) and 141–164 (TALN…TKGE). Low complexity predominate over residues 84-119 (NSNSNTSSHSRNINGLPSSNSNIDNANSNSSSVSSL).

It is found in the secreted. This is an uncharacterized protein from Drosophila melanogaster (Fruit fly).